Reading from the N-terminus, the 1270-residue chain is DNA-directed RNA polymerase subunit beta (1270 aa).

It belongs to the RNA polymerase beta chain family. The RNAP catalytic core consists of 2 alpha, 1 beta, 1 beta' and 1 omega subunit. When a sigma factor is associated with the core the holoenzyme is formed, which can initiate transcription.

The catalysed reaction is RNA(n) + a ribonucleoside 5'-triphosphate = RNA(n+1) + diphosphate. Functionally, DNA-dependent RNA polymerase catalyzes the transcription of DNA into RNA using the four ribonucleoside triphosphates as substrates. This chain is DNA-directed RNA polymerase subunit beta, found in Flavobacterium johnsoniae (strain ATCC 17061 / DSM 2064 / JCM 8514 / BCRC 14874 / CCUG 350202 / NBRC 14942 / NCIMB 11054 / UW101) (Cytophaga johnsonae).